Reading from the N-terminus, the 670-residue chain is Thrombospondin-type laminin G domain and EAR repeat-containing protein (670 aa).

The first 20 residues, 1 to 20 (MSALLMLCAVLLLLGTPSRG), serve as a signal peptide directing secretion. The 220-residue stretch at 59-278 (GLQFSATEPR…KVTLGSRPPC (220 aa)) folds into the Laminin G-like domain. 7 EAR repeats span residues 314-359 (DYVE…KWTD), 361-409 (KFVS…KWSP), 413-461 (KFTL…RWNP), 465-513 (LFEA…IWLV), 515-571 (AFQL…ELNI), 575-623 (TFVK…RWQG), and 626-669 (GFVA…KLRT). Asn-498 carries an N-linked (GlcNAc...) asparagine glycan.

In the organ of Corti, expression at postnatal day 1 (P1) is restricted to the basal region of the stereocilia of inner and outer hair cells (at protein level). Expressed in the organ of Corti at P1 and P7, in cochlear ganglion, stria vascularis and vestibular ends at P7, and in inferior colliculus, remaining brainstem, cerebellum, brain hemispheres and retina at P1, P7 and in the adult. Also detected in adult liver, lung, kidney, intestine and testis but not in heart or skeletal muscle.

It localises to the secreted. It is found in the cell surface. The protein localises to the cell projection. Its subcellular location is the stereocilium. Plays a critical role in tooth and hair follicle morphogenesis through regulation of the Notch signaling pathway. May play a role in development or function of the auditory system. The chain is Thrombospondin-type laminin G domain and EAR repeat-containing protein from Mus musculus (Mouse).